The sequence spans 502 residues: ATP synthase subunit alpha (502 aa).

169–176 (GDRQVGKT) provides a ligand contact to ATP.

Belongs to the ATPase alpha/beta chains family. As to quaternary structure, F-type ATPases have 2 components, CF(1) - the catalytic core - and CF(0) - the membrane proton channel. CF(1) has five subunits: alpha(3), beta(3), gamma(1), delta(1), epsilon(1). CF(0) has three main subunits: a(1), b(2) and c(9-12). The alpha and beta chains form an alternating ring which encloses part of the gamma chain. CF(1) is attached to CF(0) by a central stalk formed by the gamma and epsilon chains, while a peripheral stalk is formed by the delta and b chains.

The protein localises to the cell membrane. It carries out the reaction ATP + H2O + 4 H(+)(in) = ADP + phosphate + 5 H(+)(out). Functionally, produces ATP from ADP in the presence of a proton gradient across the membrane. The alpha chain is a regulatory subunit. The sequence is that of ATP synthase subunit alpha from Lysinibacillus sphaericus (strain C3-41).